Here is a 122-residue protein sequence, read N- to C-terminus: Small ribosomal subunit protein uS13 (122 aa).

The disordered stretch occupies residues 94–122 (LSLPVRGQRTKTNSRTRKGKRKTVAGKKK). Residues 101 to 122 (QRTKTNSRTRKGKRKTVAGKKK) show a composition bias toward basic residues.

It belongs to the universal ribosomal protein uS13 family. Part of the 30S ribosomal subunit. Forms a loose heterodimer with protein S19. Forms two bridges to the 50S subunit in the 70S ribosome.

In terms of biological role, located at the top of the head of the 30S subunit, it contacts several helices of the 16S rRNA. In the 70S ribosome it contacts the 23S rRNA (bridge B1a) and protein L5 of the 50S subunit (bridge B1b), connecting the 2 subunits; these bridges are implicated in subunit movement. Contacts the tRNAs in the A and P-sites. The sequence is that of Small ribosomal subunit protein uS13 from Chlamydia trachomatis serovar A (strain ATCC VR-571B / DSM 19440 / HAR-13).